The primary structure comprises 252 residues: Serine/threonine phosphatase stp (252 aa).

Residues 1–22 (MHAEFRTDRGRIRHHNEDNGGV) are disordered. One can recognise a PPM-type phosphatase domain in the interval 2 to 242 (HAEFRTDRGR…DNITVLLVER (241 aa)). Positions 36, 37, 194, and 233 each coordinate Mn(2+).

The protein belongs to the PP2C family. Mn(2+) is required as a cofactor.

It is found in the cytoplasm. It localises to the membrane. It carries out the reaction O-phospho-L-seryl-[protein] + H2O = L-seryl-[protein] + phosphate. The catalysed reaction is O-phospho-L-threonyl-[protein] + H2O = L-threonyl-[protein] + phosphate. Functionally, protein phosphatase that dephosphorylates EF-Tu. The polypeptide is Serine/threonine phosphatase stp (stp) (Listeria innocua serovar 6a (strain ATCC BAA-680 / CLIP 11262)).